A 306-amino-acid chain; its full sequence is Acetyl-coenzyme A carboxylase carboxyl transferase subunit beta (306 aa).

The CoA carboxyltransferase N-terminal domain maps to leucine 28–valine 297. The disordered stretch occupies residues glutamine 287–alanine 306. Residues proline 296 to alanine 306 are compositionally biased toward pro residues.

The protein belongs to the AccD/PCCB family. As to quaternary structure, acetyl-CoA carboxylase is a heterohexamer composed of biotin carboxyl carrier protein (AccB), biotin carboxylase (AccC) and two subunits each of ACCase subunit alpha (AccA) and ACCase subunit beta (AccD).

The protein resides in the cytoplasm. The catalysed reaction is N(6)-carboxybiotinyl-L-lysyl-[protein] + acetyl-CoA = N(6)-biotinyl-L-lysyl-[protein] + malonyl-CoA. It functions in the pathway lipid metabolism; malonyl-CoA biosynthesis; malonyl-CoA from acetyl-CoA: step 1/1. In terms of biological role, component of the acetyl coenzyme A carboxylase (ACC) complex. Biotin carboxylase (BC) catalyzes the carboxylation of biotin on its carrier protein (BCCP) and then the CO(2) group is transferred by the transcarboxylase to acetyl-CoA to form malonyl-CoA. This chain is Acetyl-coenzyme A carboxylase carboxyl transferase subunit beta, found in Methylorubrum populi (strain ATCC BAA-705 / NCIMB 13946 / BJ001) (Methylobacterium populi).